The chain runs to 314 residues: Probable cell division protein WhiA (314 aa).

The segment at residues serine 274–serine 308 is a DNA-binding region (H-T-H motif).

The protein belongs to the WhiA family.

Functionally, involved in cell division and chromosome segregation. In Staphylococcus carnosus (strain TM300), this protein is Probable cell division protein WhiA.